Consider the following 279-residue polypeptide: Putative Delta(7)-sterol-C5(6)-desaturase 2 (279 aa).

Helical transmembrane passes span 48–68 (LAGNILYFISGFLWCFYIYYL) and 127–147 (FLCFLYIALYLVLVEFMIYWV). Positions 134–263 (ALYLVLVEFM…TIWMDWMFGS (130 aa)) constitute a Fatty acid hydroxylase domain. A Histidine box-1 motif is present at residues 148 to 152 (HKELH). The Histidine box-2 signature appears at 162-166 (HATHH). The helical transmembrane segment at 194–214 (HVIALFIVPIHLITHLSLLFL) threads the bilayer. A Histidine box-3 motif is present at residues 239 to 243 (HTIHH).

This sequence belongs to the sterol desaturase family. The cofactor is Fe cation.

It localises to the endoplasmic reticulum membrane. It catalyses the reaction a Delta(7)-sterol + 2 Fe(II)-[cytochrome b5] + O2 + 2 H(+) = a Delta(5),Delta(7)-sterol + 2 Fe(III)-[cytochrome b5] + 2 H2O. This chain is Putative Delta(7)-sterol-C5(6)-desaturase 2 (HDF7), found in Arabidopsis thaliana (Mouse-ear cress).